We begin with the raw amino-acid sequence, 311 residues long: MVLRLSFMGTPDFSVPILQALLDAGHDIAAVYSQPPRPAGRRGLKLIPSPVQNLAKAKSIPVFTPQTLKTAEQQTKFTELAVDVAIVVAYGLLLPKTILETPRFGCFNAHASLLPRWRGAAPIQRAIMAGDKETGMTIMKMDEGLDTGPIALSCAIPITDNTTTNELAHKLSHIGADLMIEMLSALEKGQLKLTAQSGENITYASKIKKEETRIDWTKPAEFIHRYIRALSPFPGCWCNMNIAGREERVKILGSRLTTRPSLEIGRIEKGPDSLLIHCGQGCLEVTYLQRSGGKVLECATFLQGAHISAVF.

112–115 (SLLP) is a binding site for (6S)-5,6,7,8-tetrahydrofolate.

This sequence belongs to the Fmt family.

It catalyses the reaction L-methionyl-tRNA(fMet) + (6R)-10-formyltetrahydrofolate = N-formyl-L-methionyl-tRNA(fMet) + (6S)-5,6,7,8-tetrahydrofolate + H(+). Its function is as follows. Attaches a formyl group to the free amino group of methionyl-tRNA(fMet). The formyl group appears to play a dual role in the initiator identity of N-formylmethionyl-tRNA by promoting its recognition by IF2 and preventing the misappropriation of this tRNA by the elongation apparatus. The protein is Methionyl-tRNA formyltransferase of Bartonella henselae (strain ATCC 49882 / DSM 28221 / CCUG 30454 / Houston 1) (Rochalimaea henselae).